The chain runs to 83 residues: Insect toxin 2-13 (83 aa).

An N-terminal signal peptide occupies residues 1-21 (MKLLLLLIITASMLIEGLVNA). The region spanning 22-80 (DVYIRRHDGCKISCTVNDKYCDNECKSEGGSYGYCYAFGCWCEGLPNDKAWKSETNTCG) is the LCN-type CS-alpha/beta domain. 4 disulfide bridges follow: Cys31-Cys79, Cys35-Cys56, Cys42-Cys61, and Cys46-Cys63. Gly80 bears the Glycine amide mark.

This sequence belongs to the long (4 C-C) scorpion toxin superfamily. Sodium channel inhibitor family. Beta subfamily. As to expression, expressed by the venom gland.

Its subcellular location is the secreted. In terms of biological role, depressant insect toxins cause a transient contraction paralysis followed by a slow flaccid paralysis. They bind voltage-independently to sodium channels (Nav) and block action potentials, primarily by depolarizing the axonal membrane and suppressing the sodium current. The protein is Insect toxin 2-13 of Leiurus hebraeus (Hebrew deathstalker scorpion).